Consider the following 435-residue polypeptide: Monodehydroascorbate reductase 2 (435 aa).

Residues 14 to 17 (GGVA), Glu41, Arg48, Lys53, Ile96, and 147 to 148 (RE) each bind FAD. Residues 172–178 (GGYIGLE), Glu196, Arg202, and Gly261 contribute to the NAD(+) site. An NADP(+)-binding site is contributed by 174-178 (YIGLE). Residues Arg202 and Gly261 each contribute to the NADP(+) site. FAD is bound at residue Asp298. An NAD(+)-binding site is contributed by 314–315 (EH). 314–315 (EH) provides a ligand contact to NADP(+). FAD is bound at residue Val316. Arg320 is an L-ascorbate binding site. An FAD-binding site is contributed by Tyr349. Residue Tyr349 participates in NAD(+) binding. Tyr349 contributes to the NADP(+) binding site. Arg351 contributes to the L-ascorbate binding site. At Ser417 the chain carries Phosphoserine.

Belongs to the FAD-dependent oxidoreductase family. FAD serves as cofactor.

The protein resides in the cytoplasm. It catalyses the reaction 2 monodehydro-L-ascorbate radical + NADH + H(+) = 2 L-ascorbate + NAD(+). Functionally, catalyzes the conversion of monodehydroascorbate to ascorbate, oxidizing NADH in the process. The protein is Monodehydroascorbate reductase 2 of Arabidopsis thaliana (Mouse-ear cress).